Consider the following 205-residue polypeptide: Recombination protein RecR (205 aa).

Residues 64–79 form a C4-type zinc finger; the sequence is CRRCFNITVDELCPIC. The region spanning 87–182 is the Toprim domain; that stretch reads TKICVVEEPL…RVTRPARGLP (96 aa).

This sequence belongs to the RecR family.

May play a role in DNA repair. It seems to be involved in an RecBC-independent recombinational process of DNA repair. It may act with RecF and RecO. The chain is Recombination protein RecR from Chloroflexus aggregans (strain MD-66 / DSM 9485).